The sequence spans 661 residues: UvrABC system protein B (661 aa).

Residues 25-182 (KGLNNKKRSQ…NDLVNLQYER (158 aa)) form the Helicase ATP-binding domain. 38–45 (GITGSGKT) lines the ATP pocket. Residues 91 to 114 (YYDYYQPEAYIPKTDVFIEKDSSI) carry the Beta-hairpin motif. One can recognise a Helicase C-terminal domain in the interval 430-592 (QVEDLVGEIQ…IIPKTINRTI (163 aa)). The UVR domain occupies 621-656 (KAHIDKLRKEMLKAASNLEFEQAAKLRDQLKTLEEA).

The protein belongs to the UvrB family. As to quaternary structure, forms a heterotetramer with UvrA during the search for lesions. Interacts with UvrC in an incision complex.

The protein resides in the cytoplasm. Functionally, the UvrABC repair system catalyzes the recognition and processing of DNA lesions. A damage recognition complex composed of 2 UvrA and 2 UvrB subunits scans DNA for abnormalities. Upon binding of the UvrA(2)B(2) complex to a putative damaged site, the DNA wraps around one UvrB monomer. DNA wrap is dependent on ATP binding by UvrB and probably causes local melting of the DNA helix, facilitating insertion of UvrB beta-hairpin between the DNA strands. Then UvrB probes one DNA strand for the presence of a lesion. If a lesion is found the UvrA subunits dissociate and the UvrB-DNA preincision complex is formed. This complex is subsequently bound by UvrC and the second UvrB is released. If no lesion is found, the DNA wraps around the other UvrB subunit that will check the other stand for damage. The sequence is that of UvrABC system protein B from Rickettsia bellii (strain RML369-C).